We begin with the raw amino-acid sequence, 213 residues long: tRNA (guanine-N(7)-)-methyltransferase (213 aa).

4 residues coordinate S-adenosyl-L-methionine: glutamate 44, glutamate 69, asparagine 96, and aspartate 118. Aspartate 118 is a catalytic residue. A substrate-binding site is contributed by lysine 122. Residues 124–129 (RHEKRR) are interaction with RNA. Residues aspartate 154 and 191-194 (TEYE) each bind substrate.

Belongs to the class I-like SAM-binding methyltransferase superfamily. TrmB family.

The enzyme catalyses guanosine(46) in tRNA + S-adenosyl-L-methionine = N(7)-methylguanosine(46) in tRNA + S-adenosyl-L-homocysteine. Its pathway is tRNA modification; N(7)-methylguanine-tRNA biosynthesis. Its function is as follows. Catalyzes the formation of N(7)-methylguanine at position 46 (m7G46) in tRNA. The sequence is that of tRNA (guanine-N(7)-)-methyltransferase from Oceanobacillus iheyensis (strain DSM 14371 / CIP 107618 / JCM 11309 / KCTC 3954 / HTE831).